The primary structure comprises 282 residues: Acetylglutamate kinase (282 aa).

Substrate-binding positions include 62 to 63 (GG), Arg-84, and Asn-178.

The protein belongs to the acetylglutamate kinase family. ArgB subfamily.

The protein localises to the cytoplasm. The enzyme catalyses N-acetyl-L-glutamate + ATP = N-acetyl-L-glutamyl 5-phosphate + ADP. It functions in the pathway amino-acid biosynthesis; L-arginine biosynthesis; N(2)-acetyl-L-ornithine from L-glutamate: step 2/4. Functionally, catalyzes the ATP-dependent phosphorylation of N-acetyl-L-glutamate. This chain is Acetylglutamate kinase, found in Thermotoga neapolitana (strain ATCC 49049 / DSM 4359 / NBRC 107923 / NS-E).